Reading from the N-terminus, the 977-residue chain is P3N-PIPO polyprotein (977 aa).

The Peptidase S30 domain maps to 132–274 (TCSSSGLDNL…QSITLRATHF (143 aa)). Residues His183, Asp192, and Ser225 each act as for P1 proteinase activity in the active site. The short motif at 325–328 (KITC) is the Involved in interaction with stylet and aphid transmission element. The Involved in virions binding and aphid transmission signature appears at 583–585 (PTK). Residues 609–731 (MYIAKEGYCY…ESPMAQYKVG (123 aa)) form the Peptidase C6 domain. Residues Cys617 and His690 each act as for helper component proteinase activity in the active site.

This sequence belongs to the potyviridae P3N-PIPO polyprotein family. As to quaternary structure, interacts (via PIPO domain) with host PCaP1 protein; this interaction may help to anchor the movement complex to the plasma membrane from which the complex could move to the plasmodesmata. Post-translationally, potyviral RNA is expressed as two polyproteins which undergo post-translational proteolytic processing. Genome polyprotein is processed by NIa-pro, P1 and HC-pro proteinases resulting in the production of at least ten individual proteins. P3N-PIPO is cleaved by P1 and HC-pro proteinases resulting in the production of three individual proteins. The P1 proteinase and the HC-pro cleave only their respective C-termini autocatalytically.

It is found in the host cell junction. The protein localises to the host plasmodesma. The catalysed reaction is Hydrolyzes a Gly-|-Gly bond at its own C-terminus, commonly in the sequence -Tyr-Xaa-Val-Gly-|-Gly, in the processing of the potyviral polyprotein.. In terms of biological role, required for aphid transmission and also has proteolytic activity. Only cleaves a Gly-Gly dipeptide at its own C-terminus. Interacts with virions and aphid stylets. Acts as a suppressor of RNA-mediated gene silencing, also known as post-transcriptional gene silencing (PTGS), a mechanism of plant viral defense that limits the accumulation of viral RNAs. May have RNA-binding activity. Its function is as follows. Allows efficient cell to cell propagation, by bypassing the host cell wall barrier. Transports viral genome to neighboring plant cells directly through plasmosdesmata, without any budding. This Nicotiana tabacum (Common tobacco) protein is P3N-PIPO polyprotein.